A 433-amino-acid polypeptide reads, in one-letter code: CinA-like protein (433 aa).

It belongs to the CinA family.

This is CinA-like protein from Frankia casuarinae (strain DSM 45818 / CECT 9043 / HFP020203 / CcI3).